Consider the following 81-residue polypeptide: Photosystem I iron-sulfur center (81 aa).

4Fe-4S ferredoxin-type domains follow at residues 2–31 (SHAVKIYDTCIGCTQCVRACPLDVLEMVPW) and 39–68 (IAASPRTEDCVGCKRCETACPTDFLSIRVY). [4Fe-4S] cluster contacts are provided by Cys-11, Cys-14, Cys-17, Cys-21, Cys-48, Cys-51, Cys-54, and Cys-58.

The cyanobacterial PSI reaction center is composed of one copy each of PsaA,B,C,D,E,F,I,J,K,L,M and X, and forms trimeric complexes. It depends on [4Fe-4S] cluster as a cofactor.

The protein resides in the cellular thylakoid membrane. The enzyme catalyses reduced [plastocyanin] + hnu + oxidized [2Fe-2S]-[ferredoxin] = oxidized [plastocyanin] + reduced [2Fe-2S]-[ferredoxin]. Apoprotein for the two 4Fe-4S centers FA and FB of photosystem I (PSI); essential for photochemical activity. FB is the terminal electron acceptor of PSI, donating electrons to ferredoxin. The C-terminus interacts with PsaA/B/D and helps assemble the protein into the PSI complex. Required for binding of PsaD and PsaE to PSI. PSI is a plastocyanin/cytochrome c6-ferredoxin oxidoreductase, converting photonic excitation into a charge separation, which transfers an electron from the donor P700 chlorophyll pair to the spectroscopically characterized acceptors A0, A1, FX, FA and FB in turn. This is Photosystem I iron-sulfur center from Prochlorococcus marinus (strain MIT 9303).